Consider the following 146-residue polypeptide: 3-dehydroquinate dehydratase (146 aa).

Tyr22 functions as the Proton acceptor in the catalytic mechanism. Substrate-binding residues include Asn74, His80, and Asp87. His100 acts as the Proton donor in catalysis. Substrate contacts are provided by residues 101 to 102 (LS) and Arg111.

It belongs to the type-II 3-dehydroquinase family. As to quaternary structure, homododecamer.

The catalysed reaction is 3-dehydroquinate = 3-dehydroshikimate + H2O. The protein operates within metabolic intermediate biosynthesis; chorismate biosynthesis; chorismate from D-erythrose 4-phosphate and phosphoenolpyruvate: step 3/7. In terms of biological role, catalyzes a trans-dehydration via an enolate intermediate. The protein is 3-dehydroquinate dehydratase of Clostridium perfringens (strain 13 / Type A).